The primary structure comprises 574 residues: MTVKDIPFWRVLLIFQTARVYAGFGDPREAITIIHQQHGKPCDCAGGYVITAPTVYLATVSCSSHTAYQPSDSLKWRCVSNPTLANGENIGNCPCQTFKESVHSSCYTTYQECFFGNKTYYTAILASNRAPTIGTSNVPTVLGNTHNLLSAGCTGTVGQHICWNPKAPVHISDGGGPQDKAREIAVQKRLEEIHRSLFPELRYHPLALPKARGKEKIDAQTFNLLTATYSLLNKSNPNLANECWLCLPSGNPVPLAIPSNDSFLGSNLSCPIIPPLLVQPLEFINLINASCLYSPSQNNSFDVDVGLVEFTNCSTTLNISHSLCAPNSSVFVCGNNKAYTYLPTNWTGTCVLATLLPDIDIVPGDAPVPVPAIDHYLHRARRAVQFIPLLVGLGITTAVSTGTTGLGYSITQYTKLSRQLISDVQAISSTIQDLQDQVDSLAEVVLQNRRGLDLFTAEQGGICLALQEKCCFYANKSGIVRDKIKALQEDLEKRRKEIIDNPFWTGLHGLLPYLLPLLRPLLCLLLLITFGPLIFNKIIAFVKQQMDAIQAKPIQVHYHRLEQEDNGGVYLRVS.

Residues M1 to A22 form the signal peptide. Over G23–L514 the chain is Extracellular. N117 and N233 each carry an N-linked (GlcNAc...) asparagine; by host glycan. The CXXC signature appears at C243 to C246. 3 cysteine pairs are disulfide-bonded: C243–C246, C243–C471, and C463–C470. N-linked (GlcNAc...) asparagine; by host glycans are attached at residues N260, N267, N288, N298, N312, N318, N327, and N345. Positions F386–L406 are fusion peptide. Coiled-coil stretches lie at residues G407–A457 and Q467–F503. Residues L446 to I462 form an immunosuppression region. The short motif at C463–C471 is the CX6CC element. Residue N475 is glycosylated (N-linked (GlcNAc...) asparagine; by host). Residues L515 to F535 form a helical membrane-spanning segment. Residues N536 to S574 are Cytoplasmic-facing. The YXXL motif; contains endocytosis signal signature appears at Y558–L561.

As to quaternary structure, the mature envelope protein (Env) consists of a trimer of SU-TM heterodimers attached by a labile interchain disulfide bond. Specific enzymatic cleavages in vivo yield mature proteins. Envelope glycoproteins are synthesized as an inactive precursor that is N-glycosylated and processed likely by host cell furin or by a furin-like protease in the Golgi to yield the mature SU and TM proteins. The cleavage site between SU and TM requires the minimal sequence [KR]-X-[KR]-R. The R-peptide is released from the C-terminus of the cytoplasmic tail of the TM protein upon particle formation as a result of proteolytic cleavage by the viral protease. Cleavage of this peptide is required for TM to become fusogenic. In terms of processing, the CXXC motif is highly conserved across a broad range of retroviral envelope proteins. It is thought to participate in the formation of a labile disulfide bond possibly with the CX6CC motif present in the transmembrane protein. Isomerization of the intersubunit disulfide bond to an SU intrachain disulfide bond is thought to occur upon receptor recognition in order to allow membrane fusion.

It is found in the virion membrane. The protein localises to the host cell membrane. In terms of biological role, the surface protein (SU) attaches the virus to the host cell by binding to its receptor. This interaction triggers the refolding of the transmembrane protein (TM) and is thought to activate its fusogenic potential by unmasking its fusion peptide. Fusion occurs at the host cell plasma membrane. The transmembrane protein (TM) acts as a class I viral fusion protein. Under the current model, the protein has at least 3 conformational states: pre-fusion native state, pre-hairpin intermediate state, and post-fusion hairpin state. During viral and target cell membrane fusion, the coiled coil regions (heptad repeats) assume a trimer-of-hairpins structure, positioning the fusion peptide in close proximity to the C-terminal region of the ectodomain. The formation of this structure appears to drive apposition and subsequent fusion of viral and target cell membranes. Membranes fusion leads to delivery of the nucleocapsid into the cytoplasm. The protein is Envelope glycoprotein (env) of Macaca mulatta (Rhesus macaque).